The following is a 444-amino-acid chain: Putative methylesterase 15, chloroplastic (444 aa).

The span at 1 to 27 (MGNSLRCISQEQDPNQKKPSSVVNGNS) shows a compositional bias: polar residues. Disordered regions lie at residues 1-36 (MGNS…RRLS) and 48-91 (PSLS…DSLI). The N-terminal 58 residues, 1–58 (MGNSLRCISQEQDPNQKKPSSVVNGNSSEKHVRRLSLIPSFRRRTLLPSLSCSGSSTS), are a transit peptide targeting the chloroplast. Residues 53–63 (SGSSTSSTSKK) are compositionally biased toward low complexity. The span at 64–80 (GGIKTKKKIRERHHQEQ) shows a compositional bias: basic residues. Positions 81 to 90 (HHHDHEKDSL) are enriched in basic and acidic residues. Positions 188–312 (FVLVHGGGFG…QPDSNYDLME (125 aa)) constitute an AB hydrolase-1 domain. Asp-262 serves as the catalytic Acyl-ester intermediate. Active-site charge relay system residues include Asp-390 and His-418.

Belongs to the AB hydrolase superfamily. Methylesterase family.

It localises to the plastid. The protein resides in the chloroplast. Its function is as follows. Putative methylesterase. The chain is Putative methylesterase 15, chloroplastic from Arabidopsis thaliana (Mouse-ear cress).